We begin with the raw amino-acid sequence, 88 residues long: Kunitz-type serine protease inhibitor taicotoxin (88 aa).

The first 24 residues, 1 to 24, serve as a signal peptide directing secretion; the sequence is MSSGGLLLLLGLLTLWEVLTPVSS. The BPTI/Kunitz inhibitor domain maps to 31–81; the sequence is CHLPPKPGPCRAAIPRFYYNPHSKQCEKFIYGGCHGNANSFKTPDECNYTC. 3 cysteine pairs are disulfide-bonded: cysteine 31-cysteine 81, cysteine 40-cysteine 64, and cysteine 56-cysteine 77. Residues 87 to 88 constitute a propeptide that is removed on maturation; that stretch reads PK.

It belongs to the venom Kunitz-type family. As to quaternary structure, heterotrimer composed of an alpha-neurotoxin-like peptide of 8 kDa (AC P0CJ35), a neurotoxic phospholipase of 16 kDa (AC Q7LZG2) and this serine protease inhibitor of 7 kDa at an approximate stoichiometry of 1:1:4; non-covalently linked. Expressed by the venom gland.

It is found in the secreted. Its function is as follows. Heterotrimer: blocks the voltage-dependent L-type calcium channels (Cav) from the heart, and the small conductance calcium-activated potassium channels (KCa) in the chromaffin cells and in the brain. Is very toxic to mice. Functionally, monomer: serine protease inhibitor that inhibits plasma kallikrein (Ki=0.057 nM), tissue kallikrein (Ki=0.23 nM), trypsin (Ki=0.31 nM), plasmin (Ki=6.1 nM), elastase (Ki=201 nM), factor Xa (Ki=871 nM), alpha-factor XIIa (Ki=2380 nM). Does not inhibit APC, urokinase-type plasminogen activator (uPA/PLAU), tissue plasminogen activator (tPA/PLAT), thrombin and factor VIIa. In addition, the monomer inhibits fibrinolysis in whole blood and prolonged the intrinsec clotting time. The chain is Kunitz-type serine protease inhibitor taicotoxin from Oxyuranus scutellatus scutellatus (Australian taipan).